The primary structure comprises 339 residues: Dihydroorotate dehydrogenase (quinone) (339 aa).

FMN contacts are provided by residues A62–K66 and T86. K66 is a binding site for substrate. Residue N111–F115 participates in substrate binding. Positions 139 and 172 each coordinate FMN. N172 is a binding site for substrate. S175 acts as the Nucleophile in catalysis. N177 lines the substrate pocket. FMN contacts are provided by K217 and T245. N246–T247 is a substrate binding site. FMN is bound by residues G268, G297, and Y318–S319.

It belongs to the dihydroorotate dehydrogenase family. Type 2 subfamily. As to quaternary structure, monomer. Requires FMN as cofactor.

It is found in the cell membrane. The catalysed reaction is (S)-dihydroorotate + a quinone = orotate + a quinol. It participates in pyrimidine metabolism; UMP biosynthesis via de novo pathway; orotate from (S)-dihydroorotate (quinone route): step 1/1. In terms of biological role, catalyzes the conversion of dihydroorotate to orotate with quinone as electron acceptor. The chain is Dihydroorotate dehydrogenase (quinone) from Shewanella frigidimarina (strain NCIMB 400).